Here is a 369-residue protein sequence, read N- to C-terminus: Opsin Rh6 (369 aa).

The Extracellular portion of the chain corresponds to 1-46; sequence MASLHPPSFAYMRDGRNLSLAESVPAEIMHMVDPYWYQWPPLEPMW. An N-linked (GlcNAc...) asparagine glycan is attached at N17. The chain crosses the membrane as a helical span at residues 47–71; the sequence is FGIIGFVIAILGTMSLAGNFIVMYI. At 72-83 the chain is on the cytoplasmic side; sequence FTSSKGLRTPSN. Residues 84–109 form a helical membrane-spanning segment; that stretch reads MFVVNLAFSDFMMMFTMFPPVVLNGF. Residues 110–123 are Extracellular-facing; sequence YGTWIMGPFLCELY. An intrachain disulfide couples C120 to C197. A helical membrane pass occupies residues 124-143; sequence GMFGSLFGCVSIWSMTLIAY. The Cytoplasmic segment spans residues 144 to 162; sequence DRYCVIVKGMARKPLTATA. A helical membrane pass occupies residues 163–186; it reads AVLRLMVVWTICGAWALMPLFGWN. The Extracellular segment spans residues 187-210; that stretch reads RYVPEGNMTACGTDYFAKDWWNRS. Residues N193 and N208 are each glycosylated (N-linked (GlcNAc...) asparagine). The chain crosses the membrane as a helical span at residues 211–238; that stretch reads YIIVYSLWVYLTPLLTIIFSYWHIMKAV. Over 239–274 the chain is Cytoplasmic; sequence AAHEKAMREQAKKMNVASLRNSEADKSKAIEIKLAK. The chain crosses the membrane as a helical span at residues 275 to 298; sequence VALTTISLWFFAWTPYTIINYAGI. Over 299 to 305 the chain is Extracellular; sequence FESMHLS. The chain crosses the membrane as a helical span at residues 306–330; sequence PLSTICGSVFAKANAVCNPIVYGLS. K317 is subject to N6-(retinylidene)lysine. The Cytoplasmic portion of the chain corresponds to 331-369; sequence HPKYKQVLREKMPCLACGKDDLTSDSRTQATAEISESQA.

The protein belongs to the G-protein coupled receptor 1 family. Opsin subfamily. Phosphorylated on some or all of the serine and threonine residues present in the C-terminal region. Each Drosophila eye is composed of 800 facets or ommatidia. Each ommatidium contains 8 photoreceptor cells (R1-R8), the R1 to R6 cells are outer cells, while R7 and R8 are inner cells. Rh6 is expressed in a subset of R8 cells, most likely expressed in the subset of R8 cells paired with Rh4-expressing R7 cells (R7y).

It is found in the membrane. Functionally, visual pigments are the light-absorbing molecules that mediate vision. They consist of an apoprotein, opsin, covalently linked to cis-retinal. In Drosophila melanogaster (Fruit fly), this protein is Opsin Rh6 (Rh6).